We begin with the raw amino-acid sequence, 559 residues long: Formate--tetrahydrofolate ligase (559 aa).

67–74 contacts ATP; it reads TPAGEGKS.

The protein belongs to the formate--tetrahydrofolate ligase family.

The enzyme catalyses (6S)-5,6,7,8-tetrahydrofolate + formate + ATP = (6R)-10-formyltetrahydrofolate + ADP + phosphate. Its pathway is one-carbon metabolism; tetrahydrofolate interconversion. The chain is Formate--tetrahydrofolate ligase from Lactobacillus delbrueckii subsp. bulgaricus (strain ATCC 11842 / DSM 20081 / BCRC 10696 / JCM 1002 / NBRC 13953 / NCIMB 11778 / NCTC 12712 / WDCM 00102 / Lb 14).